The sequence spans 291 residues: m-AAA protease-interacting protein 1, mitochondrial (291 aa).

The transit peptide at 1–96 (MALAARLLPL…SLPASPSRSY (96 aa)) directs the protein to the mitochondrion.

In terms of assembly, interacts with AFG3L2. Interacts with SPG7. Interacts with SMDT1/EMRE (via the N-terminal transit peptide); interaction is direct and takes place before maturation of SMDT1/EMRE.

The protein localises to the mitochondrion matrix. Functionally, promotes sorting of SMDT1/EMRE in mitochondria by ensuring its maturation. Interacts with the transit peptide region of SMDT1/EMRE precursor protein in the mitochondrial matrix, leading to protect it against protein degradation by YME1L1, thereby ensuring SMDT1/EMRE maturation by the mitochondrial processing peptidase (PMPCA and PMPCB). In Mus musculus (Mouse), this protein is m-AAA protease-interacting protein 1, mitochondrial.